A 1233-amino-acid chain; its full sequence is Structural maintenance of chromosomes protein 1A (1233 aa).

Residue 32 to 39 (GPNGSGKS) participates in ATP binding. Coiled-coil stretches lie at residues 104-124 (EYKI…LEKL) and 163-503 (ELAQ…KAEI). The segment covering 284 to 293 (IKEKDSELNQ) has biased composition (basic and acidic residues). 2 disordered regions span residues 284–308 (IKEK…TSHK) and 348–369 (QEFE…TLEE). Phosphoserine is present on residues Ser-358 and Ser-360. The region spanning 515 to 629 (VYGRLIDLCQ…DNVEDARRIA (115 aa)) is the SMC hinge domain. An N6-acetyllysine mark is found at Lys-648 and Lys-713. Positions 660–935 (KAKARRWDEK…RHNLLQACKM (276 aa)) form a coiled coil. Residues 947 to 966 (MDDISQEEGSSQGEDSVSGS) form a disordered region. The segment covering 953–966 (EEGSSQGEDSVSGS) has biased composition (low complexity). At Ser-957 the chain carries Phosphoserine; by ATM. A Phosphoserine modification is found at Ser-962. The residue at position 966 (Ser-966) is a Phosphoserine; by ATM and ATR. At Ser-970 the chain carries Phosphoserine. Residues 991 to 1068 (KDAQAEEEIK…FEQIKKERFD (78 aa)) adopt a coiled-coil conformation. Lys-1037 bears the N6-acetyllysine mark.

The protein belongs to the SMC family. SMC1 subfamily. In terms of assembly, forms a heterodimer with SMC3 in cohesin complexes. Cohesin complexes are composed of the SMC1 (SMC1A or SMC1B) and SMC3 heterodimer attached via their SMC hinge domain, RAD21 which link them, and one STAG protein (STAG1, STAG2 or STAG3), which interacts with RAD21. In germ cell cohesin complexes, SMC1A is mutually exclusive with SMC1B. Interacts with BRCA1. Found in a complex with CDCA5, SMC3 and RAD21, PDS5A/SCC-112 and PDS5B/APRIN. Interacts with NDC80. Interacts with BRAT1. Found in a complex containing POLE and SMC3. Interacts with RPGR, STAG3 and SYCP2. The cohesin complex interacts with the cohesin loading complex subunits NIPBL/Scc2 (via HEAT repeats) and MAU2/Scc4. NIPBL directly contacts all members of the complex, RAD21, SMC1A/B, SMC3 and STAG1. In terms of processing, ubiquitinated by the DCX(DCAF15) complex, leading to its degradation. Phosphorylated by ATM upon ionizing radiation in a NBS1-dependent manner. Phosphorylated by ATR upon DNA methylation in a MSH2/MSH6-dependent manner. Phosphorylation of Ser-957 and Ser-966 activates it and is required for S-phase checkpoint activation.

The protein resides in the nucleus. It is found in the chromosome. Its subcellular location is the centromere. It localises to the kinetochore. In terms of biological role, involved in chromosome cohesion during cell cycle and in DNA repair. Central component of cohesin complex. The cohesin complex is required for the cohesion of sister chromatids after DNA replication. The cohesin complex apparently forms a large proteinaceous ring within which sister chromatids can be trapped. At anaphase, the complex is cleaved and dissociates from chromatin, allowing sister chromatids to segregate. The cohesin complex may also play a role in spindle pole assembly during mitosis. Involved in DNA repair via its interaction with BRCA1 and its related phosphorylation by ATM, or via its phosphorylation by ATR. Works as a downstream effector both in the ATM/NBS1 branch and in the ATR/MSH2 branch of S-phase checkpoint. This Homo sapiens (Human) protein is Structural maintenance of chromosomes protein 1A (SMC1A).